The primary structure comprises 271 residues: 2-aminophenol 1,6-dioxygenase subunit alpha (271 aa).

Belongs to the LigB/MhpB extradiol dioxygenase family. The APD complex is a heterotetramer of 2 alpha (CnbCa) and 2 beta (CnbCb) subunits.

It functions in the pathway xenobiotic degradation; nitrobenzene degradation. The protein operates within xenobiotic degradation; 4-chloronitrobenzene degradation. In terms of biological role, component of the 2-aminophenol 1,6-dioxygenase (APD) complex that catalyzes the ring fission of 2-aminophenol to produce 2-aminomuconic semialdehyde. CnbCa may have a role in the stability of the complex. The complex is also active on other substrates such as 2-amino-5-chlorophenol (68% activity), protocatechuate (33% activity) and catechol (5% activity). Both 2-aminophenol and 2-amino-5-cholorophenol are likely native substrates for this dioxygenase which is involved in the reductive degradation pathway of both nitrobenzene (NB) and 4-chloronitrobenzene (4-CNB), allowing C.testosteroni strain CNB-1 to grow on these compounds as sole source of carbon, nitrogen, and energy. This is 2-aminophenol 1,6-dioxygenase subunit alpha from Comamonas testosteroni (Pseudomonas testosteroni).